Here is a 306-residue protein sequence, read N- to C-terminus: Pantothenate kinase (306 aa).

Residue 91 to 98 coordinates ATP; that stretch reads GSVAVGKS.

This sequence belongs to the prokaryotic pantothenate kinase family.

The protein localises to the cytoplasm. The catalysed reaction is (R)-pantothenate + ATP = (R)-4'-phosphopantothenate + ADP + H(+). It participates in cofactor biosynthesis; coenzyme A biosynthesis; CoA from (R)-pantothenate: step 1/5. This chain is Pantothenate kinase, found in Streptococcus thermophilus (strain ATCC BAA-491 / LMD-9).